The chain runs to 450 residues: tRNA modification GTPase MnmE (450 aa).

Arg21, Glu80, and Lys119 together coordinate (6S)-5-formyl-5,6,7,8-tetrahydrofolate. One can recognise a TrmE-type G domain in the interval 213–373; sequence GIKVVIIGKP…LEEEIIKSVK (161 aa). Asn223 lines the K(+) pocket. GTP is bound by residues 223–228, 242–248, and 267–270; these read NVGKST, TDIPGTT, and DTAG. Ser227 provides a ligand contact to Mg(2+). K(+)-binding residues include Thr242, Ile244, and Thr247. Position 248 (Thr248) interacts with Mg(2+). Lys450 provides a ligand contact to (6S)-5-formyl-5,6,7,8-tetrahydrofolate.

It belongs to the TRAFAC class TrmE-Era-EngA-EngB-Septin-like GTPase superfamily. TrmE GTPase family. Homodimer. Heterotetramer of two MnmE and two MnmG subunits. Requires K(+) as cofactor.

It localises to the cytoplasm. Exhibits a very high intrinsic GTPase hydrolysis rate. Involved in the addition of a carboxymethylaminomethyl (cmnm) group at the wobble position (U34) of certain tRNAs, forming tRNA-cmnm(5)s(2)U34. This is tRNA modification GTPase MnmE from Pseudothermotoga lettingae (strain ATCC BAA-301 / DSM 14385 / NBRC 107922 / TMO) (Thermotoga lettingae).